The sequence spans 620 residues: Sodium-dependent dopamine transporter (620 aa).

Residues 1–56 (MSKSKCSVGLMSSVVAPAKEPNAVGPKEVELILVKEQNGVQLTSSTLTNPRQSPVE) are Cytoplasmic-facing. A discontinuously helical membrane pass occupies residues 57-95 (AQDRETWGKKIDFLLSVIGFAVDLANVWRFPYLCYKNGG). Na(+) is bound by residues Gly-75, Ala-77, Val-78, Asp-79, and Asn-82. Asp-79 is a dopamine binding site. A run of 2 helical transmembrane segments spans residues 96 to 127 (GAFL…NREG) and 128 to 171 (AAGV…FSSF). Positions 149 and 153 each coordinate dopamine. Over 172–236 (TTELPWIHCN…SHGIDDLGPP (65 aa)) the chain is Extracellular. An intrachain disulfide couples Cys-180 to Cys-189. Residues Asn-181, Asn-188, and Asn-205 are each glycosylated (N-linked (GlcNAc...) asparagine). The next 2 helical transmembrane spans lie at 237–256 (RWQL…FSLW) and 257–287 (KGVK…GVTL). Topologically, residues 288–306 (PGAIDGIRAYLSVDFYRLC) are extracellular. A discontinuously helical transmembrane segment spans residues 307 to 335 (EASVWIDAATQVCFSLGVGFGVLIAFSSY). Gln-317 contacts chloride. Phe-320 contributes to the dopamine binding site. The Na(+) site is built by Ser-321 and Asn-353. Ser-321 serves as a coordination point for chloride. The chain crosses the membrane as a helical span at residues 336 to 376 (NKFTNNCYRDAIVTTSINSLTSFSSGFVVFSFLGYMAQKHS). Ser-357 lines the chloride pocket. At 377-400 (VPIGDVAKDGPGLIFIIYPEAIAT) the chain is on the extracellular side. The next 3 membrane-spanning stretches (helical) occupy residues 401–442 (LPLS…QLLH), 443–466 (RHRE…CVTN), and 467–499 (GGIY…AWFY). Na(+) is bound by residues Leu-418, Asp-421, and Ser-422. The dopamine site is built by Ser-422 and Ala-423. Residues 500–516 (GVGQFSDDIQQMTGQRP) are Cytoplasmic-facing. A helical transmembrane segment spans residues 517–542 (SLYWRLCWKLVSPCFLLFVVVVSIVT). Residues 543–553 (FRPPHYGAYIF) lie on the Extracellular side of the membrane. The chain crosses the membrane as a helical span at residues 554–583 (PDWANALGWVIATSSMAMVPIYAAYKFCSL). Residues 561–590 (GWVIATSSMAMVPIYAAYKFCSLPGSFREK) are interaction with TGFB1I1. The Cytoplasmic portion of the chain corresponds to 584 to 620 (PGSFREKLAYAIAPEKDRELVDRGEVRQFTLRHWLKV).

It belongs to the sodium:neurotransmitter symporter (SNF) (TC 2.A.22) family. SLC6A3 subfamily. In terms of assembly, monomer. Homooligomer; disulfide-linked. Interacts with PRKCABP and TGFB1I1. Interacts (via N-terminus) with SYNGR3 (via N-terminus). Interacts with SLC18A2. Interacts with TOR1A (ATP-bound); TOR1A regulates SLC6A3 subcellular location. Interacts with alpha-synuclein/SNCA. Interacts with SEPTIN4. Highly expressed in substantia nigra. Expressed in axonal varicosities in dopaminergic nerve terminals (at protein level). Expressed in the striatum (at protein level).

It localises to the cell membrane. The protein resides in the cell projection. It is found in the neuron projection. The protein localises to the axon. The catalysed reaction is dopamine(out) + chloride(out) + Na(+)(out) = dopamine(in) + chloride(in) + Na(+)(in). The enzyme catalyses dopamine(out) + chloride(out) + 2 Na(+)(out) = dopamine(in) + chloride(in) + 2 Na(+)(in). It carries out the reaction (R)-noradrenaline(out) + chloride(out) + Na(+)(out) = (R)-noradrenaline(in) + chloride(in) + Na(+)(in). With respect to regulation, inhibited by cocaine, which occupies the same binding site as dopamine. Inhibited by zinc ions. Enhanced by the antibiotic valinomycin. Inhibited by benztropine. Inhibited by GBR 12909 dihydrochloride and amphetamine. Inhibited by mazindol, GBR 12783 dihydrochloride, nomifensine, diclofensine, amfonelic acid, Lu 19005, Win-35428, bupropion and ritalin. In terms of biological role, mediates sodium- and chloride-dependent transport of dopamine. Also mediates sodium- and chloride-dependent transport of norepinephrine (also known as noradrenaline). Regulator of light-dependent retinal hyaloid vessel regression, downstream of OPN5 signaling. The chain is Sodium-dependent dopamine transporter (SLC6A3) from Homo sapiens (Human).